Reading from the N-terminus, the 166-residue chain is Large ribosomal subunit protein bL19 (166 aa).

Belongs to the bacterial ribosomal protein bL19 family. As to quaternary structure, part of the 50S ribosomal subunit. Forms a cluster with proteins L3 and L14.

In terms of biological role, this protein is located at the 30S-50S ribosomal subunit interface and may play a role in the structure and function of the aminoacyl-tRNA binding site. Binds the 23S rRNA. The chain is Large ribosomal subunit protein bL19 (rplS) from Deinococcus radiodurans (strain ATCC 13939 / DSM 20539 / JCM 16871 / CCUG 27074 / LMG 4051 / NBRC 15346 / NCIMB 9279 / VKM B-1422 / R1).